The sequence spans 299 residues: UTP--glucose-1-phosphate uridylyltransferase 1 (299 aa).

It belongs to the UDPGP type 2 family.

The enzyme catalyses alpha-D-glucose 1-phosphate + UTP + H(+) = UDP-alpha-D-glucose + diphosphate. The protein operates within carbohydrate metabolism; nucleotide-sugar metabolism. The polypeptide is UTP--glucose-1-phosphate uridylyltransferase 1 (hasC1) (Streptococcus pyogenes serotype M6 (strain ATCC BAA-946 / MGAS10394)).